A 208-amino-acid polypeptide reads, in one-letter code: Segregation and condensation protein B (208 aa).

Belongs to the ScpB family. In terms of assembly, homodimer. Homodimerization may be required to stabilize the binding of ScpA to the Smc head domains. Component of a cohesin-like complex composed of ScpA, ScpB and the Smc homodimer, in which ScpA and ScpB bind to the head domain of Smc. The presence of the three proteins is required for the association of the complex with DNA.

It localises to the cytoplasm. Functionally, participates in chromosomal partition during cell division. May act via the formation of a condensin-like complex containing Smc and ScpA that pull DNA away from mid-cell into both cell halves. In Mycoplasma pneumoniae (strain ATCC 29342 / M129 / Subtype 1) (Mycoplasmoides pneumoniae), this protein is Segregation and condensation protein B.